We begin with the raw amino-acid sequence, 433 residues long: Glucose-1-phosphate adenylyltransferase (433 aa).

Residues Tyr117, Gly182, 197-198 (EK), and Ser215 contribute to the alpha-D-glucose 1-phosphate site.

The protein belongs to the bacterial/plant glucose-1-phosphate adenylyltransferase family. As to quaternary structure, homotetramer.

It catalyses the reaction alpha-D-glucose 1-phosphate + ATP + H(+) = ADP-alpha-D-glucose + diphosphate. Its pathway is glycan biosynthesis; glycogen biosynthesis. Functionally, involved in the biosynthesis of ADP-glucose, a building block required for the elongation reactions to produce glycogen. Catalyzes the reaction between ATP and alpha-D-glucose 1-phosphate (G1P) to produce pyrophosphate and ADP-Glc. This Nitrosomonas europaea (strain ATCC 19718 / CIP 103999 / KCTC 2705 / NBRC 14298) protein is Glucose-1-phosphate adenylyltransferase.